Here is an 852-residue protein sequence, read N- to C-terminus: Lon protease homolog 2, peroxisomal (852 aa).

Ser-2 bears the N-acetylserine mark. One can recognise a Lon N-terminal domain in the interval 13–222 (LPLLLTHEGV…MTIPLLVRQI (210 aa)). 375 to 382 (GPPGVGKT) contributes to the ATP binding site. The 187-residue stretch at 651–837 (LSQPGVAIGL…DEVLNAAFDG (187 aa)) folds into the Lon proteolytic domain. Active-site residues include Ser-743 and Lys-786. Residues 850–852 (SKL) carry the Microbody targeting signal motif.

The protein belongs to the peptidase S16 family. As to quaternary structure, interacts with PEX5. Interacts with TYSND1. May interact with enzymes involved in beta-oxidation of fatty acids, including ACOX1/AOX. Widely expressed, with high levels in the liver, kidney and pancreas.

It localises to the peroxisome matrix. The enzyme catalyses Hydrolysis of proteins in presence of ATP.. In terms of biological role, ATP-dependent serine protease that mediates the selective degradation of misfolded and unassembled polypeptides in the peroxisomal matrix. Necessary for type 2 peroxisome targeting signal (PTS2)-containing protein processing and facilitates peroxisome matrix protein import. May indirectly regulate peroxisomal fatty acid beta-oxidation through degradation of the self-processed forms of TYSND1. The sequence is that of Lon protease homolog 2, peroxisomal from Homo sapiens (Human).